A 123-amino-acid chain; its full sequence is Large ribosomal subunit protein uL14 (123 aa).

This sequence belongs to the universal ribosomal protein uL14 family. In terms of assembly, part of the 50S ribosomal subunit. Forms a cluster with proteins L3 and L19. In the 70S ribosome, L14 and L19 interact and together make contacts with the 16S rRNA in bridges B5 and B8.

In terms of biological role, binds to 23S rRNA. Forms part of two intersubunit bridges in the 70S ribosome. The polypeptide is Large ribosomal subunit protein uL14 (Buchnera aphidicola subsp. Cinara cedri (strain Cc)).